We begin with the raw amino-acid sequence, 122 residues long: UPF0102 protein CLL_A1253 (122 aa).

Belongs to the UPF0102 family.

The polypeptide is UPF0102 protein CLL_A1253 (Clostridium botulinum (strain Eklund 17B / Type B)).